The following is a 338-amino-acid chain: Cilia- and flagella-associated protein 36 (338 aa).

The stretch at 142–179 (ISDLEQEEMKLVSEALRLSKEEYEREQLRRSAKELNCT) forms a coiled coil. 2 disordered regions span residues 175 to 220 (ELNC…ESPY) and 281 to 314 (KKQESKKMAHNSEVHEEKATCSKQEMTEEEKKSL). The segment covering 187–202 (KQSNGSERTPSNTELP) has biased composition (polar residues). Positions 255 to 330 (NLSQAEKEQL…AEKLKEEVIL (76 aa)) form a coiled coil.

Belongs to the CFAP36 family.

Its subcellular location is the nucleus. The protein resides in the cytoplasm. The protein localises to the cell projection. It is found in the cilium. It localises to the flagellum. The sequence is that of Cilia- and flagella-associated protein 36 from Xenopus laevis (African clawed frog).